Reading from the N-terminus, the 387-residue chain is Exodeoxyribonuclease 7 large subunit (387 aa).

It belongs to the XseA family. In terms of assembly, heterooligomer composed of large and small subunits.

The protein resides in the cytoplasm. The enzyme catalyses Exonucleolytic cleavage in either 5'- to 3'- or 3'- to 5'-direction to yield nucleoside 5'-phosphates.. Its function is as follows. Bidirectionally degrades single-stranded DNA into large acid-insoluble oligonucleotides, which are then degraded further into small acid-soluble oligonucleotides. This Campylobacter hominis (strain ATCC BAA-381 / DSM 21671 / CCUG 45161 / LMG 19568 / NCTC 13146 / CH001A) protein is Exodeoxyribonuclease 7 large subunit.